A 141-amino-acid chain; its full sequence is ATP synthase epsilon chain (141 aa).

This sequence belongs to the ATPase epsilon chain family. In terms of assembly, F-type ATPases have 2 components, CF(1) - the catalytic core - and CF(0) - the membrane proton channel. CF(1) has five subunits: alpha(3), beta(3), gamma(1), delta(1), epsilon(1). CF(0) has three main subunits: a, b and c.

Its subcellular location is the cell inner membrane. Its function is as follows. Produces ATP from ADP in the presence of a proton gradient across the membrane. In Methylobacillus flagellatus (strain ATCC 51484 / DSM 6875 / VKM B-1610 / KT), this protein is ATP synthase epsilon chain.